Reading from the N-terminus, the 79-residue chain is Dolichyl-diphosphooligosaccharide--protein glycosyltransferase subunit TMEM258 (79 aa).

2 consecutive transmembrane segments (helical) span residues 17–37 and 59–79; these read VFPH…AWFF and VASL…GIFV.

It belongs to the OST5 family. As to quaternary structure, component of the oligosaccharyltransferase (OST) complex.

The protein localises to the membrane. It is found in the endoplasmic reticulum. Its subcellular location is the cytoplasm. It participates in protein modification; protein glycosylation. Subunit of the oligosaccharyl transferase (OST) complex that catalyzes the initial transfer of a defined glycan (Glc(3)Man(9)GlcNAc(2) in eukaryotes) from the lipid carrier dolichol-pyrophosphate to an asparagine residue within an Asn-X-Ser/Thr consensus motif in nascent polypeptide chains, the first step in protein N-glycosylation. N-glycosylation occurs cotranslationally and the complex associates with the Sec61 complex at the channel-forming translocon complex that mediates protein translocation across the endoplasmic reticulum (ER). All subunits are required for a maximal enzyme activity. This chain is Dolichyl-diphosphooligosaccharide--protein glycosyltransferase subunit TMEM258, found in Danio rerio (Zebrafish).